An 84-amino-acid chain; its full sequence is Mitochondrial import inner membrane translocase subunit Tim9 (84 aa).

The Twin CX3C motif signature appears at 36–60 (CFQSCITNFRIRKLDDEEQLCVYKC). Cystine bridges form between Cys-36–Cys-60 and Cys-40–Cys-56.

Belongs to the small Tim family. Heterohexamer; composed of 3 copies of timm9 and 3 copies of timm10, named soluble 70 kDa complex. Associates directly with the TIM22 complex, whose core is composed of timm22. Interacts with the transmembrane regions of multi-pass transmembrane proteins in transit.

The protein localises to the mitochondrion inner membrane. Component of the TIM22 complex, a complex that mediates the import and insertion of multi-pass transmembrane proteins into the mitochondrial inner membrane. The TIM22 complex forms a twin-pore translocase that uses the membrane potential as external driving force. The chain is Mitochondrial import inner membrane translocase subunit Tim9 (timm9) from Dictyostelium discoideum (Social amoeba).